We begin with the raw amino-acid sequence, 325 residues long: Phospholipid phosphatase-related protein type 1 (325 aa).

3 helical membrane passes run 11 to 31 (YSIIPCFIFVELVIMAGTVLL), 67 to 87 (FISPLVLYCVLAATPTAIIFI), and 127 to 147 (FIGVFAFGLFATDIFVNAGQV). A glycan (N-linked (GlcNAc...) asparagine) is linked at N163. The next 3 membrane-spanning stretches (helical) occupy residues 201–218 (AALSIYSALYATMYITST), 230–247 (VLCLGTLCCAFLTGLNRV), and 257–277 (VIGGFILGTAIALFLGLCVVH). N316 is a glycosylation site (N-linked (GlcNAc...) asparagine).

Belongs to the PA-phosphatase related phosphoesterase family.

The protein resides in the cell membrane. Its subcellular location is the cell projection. The protein localises to the neuron projection. In terms of biological role, may play a role in neurite outgrowth and neurogenesis. The polypeptide is Phospholipid phosphatase-related protein type 1 (Xenopus tropicalis (Western clawed frog)).